A 283-amino-acid polypeptide reads, in one-letter code: Acetylglutamate kinase (283 aa).

Substrate-binding positions include 63-64, arginine 85, and asparagine 179; that span reads GG.

The protein belongs to the acetylglutamate kinase family. ArgB subfamily.

It localises to the cytoplasm. The catalysed reaction is N-acetyl-L-glutamate + ATP = N-acetyl-L-glutamyl 5-phosphate + ADP. The protein operates within amino-acid biosynthesis; L-arginine biosynthesis; N(2)-acetyl-L-ornithine from L-glutamate: step 2/4. In terms of biological role, catalyzes the ATP-dependent phosphorylation of N-acetyl-L-glutamate. The chain is Acetylglutamate kinase from Clostridium kluyveri (strain NBRC 12016).